The primary structure comprises 222 residues: Cytidylate kinase (222 aa).

Residue 9–17 participates in ATP binding; the sequence is GPSGAGKST.

It belongs to the cytidylate kinase family. Type 1 subfamily.

It localises to the cytoplasm. It catalyses the reaction CMP + ATP = CDP + ADP. It carries out the reaction dCMP + ATP = dCDP + ADP. This is Cytidylate kinase from Thermodesulfovibrio yellowstonii (strain ATCC 51303 / DSM 11347 / YP87).